The chain runs to 443 residues: tRNA (guanine-N(7)-)-methyltransferase non-catalytic subunit TRM82 (443 aa).

Positions 67–93 (ASKKLKTNDGEPVAQPKKQAKVPKPGP) are disordered. 3 WD repeats span residues 97–137 (PVYQ…KDNI), 193–235 (GHVS…IVDK), and 239–279 (GHEE…LLFK).

It belongs to the WD repeat TRM82 family. As to quaternary structure, forms a heterodimer with the catalytic subunit TRM8.

It is found in the nucleus. Its pathway is tRNA modification; N(7)-methylguanine-tRNA biosynthesis. In terms of biological role, required for the formation of N(7)-methylguanine at position 46 (m7G46) in tRNA. In the complex, it is required to stabilize and induce conformational changes of the catalytic subunit. This is tRNA (guanine-N(7)-)-methyltransferase non-catalytic subunit TRM82 from Kluyveromyces lactis (strain ATCC 8585 / CBS 2359 / DSM 70799 / NBRC 1267 / NRRL Y-1140 / WM37) (Yeast).